The primary structure comprises 946 residues: Serine/threonine-protein kinase PLK4 (946 aa).

In terms of domain architecture, Protein kinase spans 12-265 (FKVLNLLGKG…LSSVLDHAFM (254 aa)). ATP-binding positions include 18–26 (LGKGSFACV) and Lys41. The active-site Proton acceptor is the Asp136. A disordered region spans residues 330–395 (HPAERSNGGS…TYGKPSSFSE (66 aa)). Residues 378–394 (RSGTSQSQTYGKPSSFS) show a composition bias toward polar residues. The region spanning 566–679 (TLRSIISPLN…AKFIQLVRSK (114 aa)) is the Cryptic POLO box 1 (CPB1) domain. The Cryptic POLO box 2 (CPB2) domain occupies 680-792 (MPKVTYYTRY…GRRPAITESP (113 aa)). A disordered region spans residues 789–828 (TESPRTQLTVDSARERKDEQSSANRVLHSSATSPPQIPNI). A compositionally biased stretch (polar residues) spans 809 to 828 (SSANRVLHSSATSPPQIPNI). The POLO box domain maps to 864–942 (QVLKSVFVEN…LSSILMLFAS (79 aa)).

Belongs to the protein kinase superfamily. Ser/Thr protein kinase family. CDC5/Polo subfamily. Homodimer. Ubiquitinated; leading to its degradation by the proteasome.

The protein localises to the cytoplasm. It localises to the cytoskeleton. The protein resides in the microtubule organizing center. It is found in the centrosome. Its subcellular location is the centriole. The catalysed reaction is L-seryl-[protein] + ATP = O-phospho-L-seryl-[protein] + ADP + H(+). It catalyses the reaction L-threonyl-[protein] + ATP = O-phospho-L-threonyl-[protein] + ADP + H(+). In terms of biological role, serine/threonine-protein kinase that plays a central role in centriole duplication. Able to trigger procentriole formation on the surface of the parental centriole cylinder, leading to the recruitment of centriole biogenesis proteins such as sass6, cpap, ccp110, cep135 and gamma-tubulin. When overexpressed, it is able to induce centrosome amplification through the simultaneous generation of multiple procentrioles adjoining each parental centriole during S phase. Its central role in centriole replication suggests a possible role in tumorigenesis, centrosome aberrations being frequently observed in tumors. Also involved in deuterosome-mediated centriole amplification in multiciliated that can generate more than 100 centrioles. In Xenopus tropicalis (Western clawed frog), this protein is Serine/threonine-protein kinase PLK4.